The primary structure comprises 306 residues: Large ribosomal subunit protein uL2m (306 aa).

Residues 1 to 60 (MALRVVTRALGSLSLTPRIAAVPGPSLLPAAQVTNNVLLQLPSASMLLPSRPLLTSVALS) constitute a mitochondrion transit peptide.

This sequence belongs to the universal ribosomal protein uL2 family. Component of the mitochondrial ribosome large subunit (39S) which comprises a 16S rRNA and about 50 distinct proteins.

It localises to the mitochondrion. The sequence is that of Large ribosomal subunit protein uL2m (MRPL2) from Bos taurus (Bovine).